We begin with the raw amino-acid sequence, 253 residues long: NAD-dependent protein deacylase 2 (253 aa).

Positions 1–252 (MEDEIRKAAE…VEEVKRLRSE (252 aa)) constitute a Deacetylase sirtuin-type domain. Residues 23–42 (GAGI…DGLW) and 100–103 (QNID) each bind NAD(+). H118 acts as the Proton acceptor in catalysis. Residues C126, C129, C150, and C153 each contribute to the Zn(2+) site. Residues 191–193 (GSS), 217–219 (NAE), and A235 each bind NAD(+).

This sequence belongs to the sirtuin family. Class III subfamily. Zn(2+) serves as cofactor.

The protein resides in the cytoplasm. The enzyme catalyses N(6)-acetyl-L-lysyl-[protein] + NAD(+) + H2O = 2''-O-acetyl-ADP-D-ribose + nicotinamide + L-lysyl-[protein]. In terms of biological role, NAD-dependent protein deacetylase which modulates the activities of several proteins which are inactive in their acetylated form. Deacetylates the N-terminal lysine residue of Alba, the major archaeal chromatin protein and that, in turn, increases Alba's DNA binding affinity, thereby repressing transcription. The protein is NAD-dependent protein deacylase 2 of Archaeoglobus fulgidus (strain ATCC 49558 / DSM 4304 / JCM 9628 / NBRC 100126 / VC-16).